The sequence spans 126 residues: Follitropin subunit beta (126 aa).

A signal peptide spans 1 to 19 (MKLIQLCILFWCWRAICCQ). 6 disulfides stabilise this stretch: Cys-21-Cys-69, Cys-35-Cys-84, Cys-38-Cys-122, Cys-46-Cys-100, Cys-50-Cys-102, and Cys-105-Cys-112. 2 N-linked (GlcNAc...) asparagine glycosylation sites follow: Asn-25 and Asn-42.

The protein belongs to the glycoprotein hormones subunit beta family. Heterodimer. The active follitropin is a heterodimer composed of an alpha chain/CGA shared with other hormones and a unique beta chain/FSHB shown here.

It localises to the secreted. In terms of biological role, together with the alpha chain CGA constitutes follitropin, the follicle-stimulating hormone, and provides its biological specificity to the hormone heterodimer. Binds FSHR, a G protein-coupled receptor, on target cells to activate downstream signaling pathways. Follitropin is involved in follicle development and spermatogenesis in reproductive organs. The polypeptide is Follitropin subunit beta (FSHB) (Phodopus sungorus (Striped hairy-footed hamster)).